A 376-amino-acid chain; its full sequence is Erythronate-4-phosphate dehydrogenase (376 aa).

Serine 45 and threonine 67 together coordinate substrate. NAD(+) is bound at residue aspartate 147. Arginine 209 is a catalytic residue. Residue aspartate 233 participates in NAD(+) binding. The active site involves glutamate 238. The active-site Proton donor is the histidine 255. An NAD(+)-binding site is contributed by glycine 258. Tyrosine 259 is a substrate binding site.

Belongs to the D-isomer specific 2-hydroxyacid dehydrogenase family. PdxB subfamily. As to quaternary structure, homodimer.

The protein localises to the cytoplasm. The catalysed reaction is 4-phospho-D-erythronate + NAD(+) = (R)-3-hydroxy-2-oxo-4-phosphooxybutanoate + NADH + H(+). It functions in the pathway cofactor biosynthesis; pyridoxine 5'-phosphate biosynthesis; pyridoxine 5'-phosphate from D-erythrose 4-phosphate: step 2/5. In terms of biological role, catalyzes the oxidation of erythronate-4-phosphate to 3-hydroxy-2-oxo-4-phosphonooxybutanoate. In Shewanella halifaxensis (strain HAW-EB4), this protein is Erythronate-4-phosphate dehydrogenase.